A 215-amino-acid chain; its full sequence is Adenylate kinase (215 aa).

10-15 (GCGKGT) contributes to the ATP binding site. The interval 30 to 59 (STGDIFRQTIDQKGPYWEELKSYISKGLLV) is NMP. AMP-binding positions include Thr31, Arg36, 57–59 (LLV), and Gln91. The segment at 120–157 (GRRICSKCKRIYNIHYSAPKKEDICDDDGEFLIQRKDD) is LID. Arg121 lines the ATP pocket. Zn(2+) is bound by residues Cys124 and Cys127. Position 130–131 (130–131 (IY)) interacts with ATP. Residues Cys144 and Asp147 each coordinate Zn(2+). 2 residues coordinate AMP: Arg154 and Arg165.

It belongs to the adenylate kinase family. Monomer.

The protein localises to the cytoplasm. The catalysed reaction is AMP + ATP = 2 ADP. Its pathway is purine metabolism; AMP biosynthesis via salvage pathway; AMP from ADP: step 1/1. Catalyzes the reversible transfer of the terminal phosphate group between ATP and AMP. Plays an important role in cellular energy homeostasis and in adenine nucleotide metabolism. The protein is Adenylate kinase of Malacoplasma penetrans (strain HF-2) (Mycoplasma penetrans).